A 148-amino-acid chain; its full sequence is Cuticle protein CP1499 (148 aa).

As to expression, calcified shell.

This chain is Cuticle protein CP1499, found in Cancer pagurus (Rock crab).